Reading from the N-terminus, the 447-residue chain is ATP synthase subunit beta (447 aa).

Residue 147 to 154 (GGAGVGKT) coordinates ATP.

It belongs to the ATPase alpha/beta chains family. As to quaternary structure, F-type ATPases have 2 components, CF(1) - the catalytic core - and CF(0) - the membrane proton channel. CF(1) has five subunits: alpha(3), beta(3), gamma(1), delta(1), epsilon(1). CF(0) has three main subunits: a(1), b(2) and c(9-12). The alpha and beta chains form an alternating ring which encloses part of the gamma chain. CF(1) is attached to CF(0) by a central stalk formed by the gamma and epsilon chains, while a peripheral stalk is formed by the delta and b chains.

It localises to the cell membrane. The catalysed reaction is ATP + H2O + 4 H(+)(in) = ADP + phosphate + 5 H(+)(out). In terms of biological role, produces ATP from ADP in the presence of a proton gradient across the membrane. The catalytic sites are hosted primarily by the beta subunits. This is ATP synthase subunit beta from Carsonella ruddii (strain PV).